The following is a 123-amino-acid chain: NADH-quinone oxidoreductase subunit A (123 aa).

A run of 3 helical transmembrane segments spans residues 11–31, 67–87, and 92–112; these read FPVL…VSIG, LVAI…PWGV, and IGWP…LGFA.

Belongs to the complex I subunit 3 family. As to quaternary structure, NDH-1 is composed of 14 different subunits. Subunits NuoA, H, J, K, L, M, N constitute the membrane sector of the complex.

The protein localises to the cell inner membrane. The catalysed reaction is a quinone + NADH + 5 H(+)(in) = a quinol + NAD(+) + 4 H(+)(out). Functionally, NDH-1 shuttles electrons from NADH, via FMN and iron-sulfur (Fe-S) centers, to quinones in the respiratory chain. The immediate electron acceptor for the enzyme in this species is believed to be ubiquinone. Couples the redox reaction to proton translocation (for every two electrons transferred, four hydrogen ions are translocated across the cytoplasmic membrane), and thus conserves the redox energy in a proton gradient. This is NADH-quinone oxidoreductase subunit A from Paraburkholderia phymatum (strain DSM 17167 / CIP 108236 / LMG 21445 / STM815) (Burkholderia phymatum).